A 310-amino-acid chain; its full sequence is p-hydroxybenzoic acid efflux pump subunit AaeA (310 aa).

A helical membrane pass occupies residues 12-32 (AITVVLVILAFIAIFNAWVYY).

Belongs to the membrane fusion protein (MFP) (TC 8.A.1) family.

Its subcellular location is the cell inner membrane. Its function is as follows. Forms an efflux pump with AaeB. The polypeptide is p-hydroxybenzoic acid efflux pump subunit AaeA (Escherichia coli O8 (strain IAI1)).